The sequence spans 498 residues: ATP synthase subunit beta, chloroplastic (498 aa).

ATP is bound at residue glycine 172–threonine 179.

It belongs to the ATPase alpha/beta chains family. F-type ATPases have 2 components, CF(1) - the catalytic core - and CF(0) - the membrane proton channel. CF(1) has five subunits: alpha(3), beta(3), gamma(1), delta(1), epsilon(1). CF(0) has four main subunits: a(1), b(1), b'(1) and c(9-12).

It localises to the plastid. The protein localises to the chloroplast thylakoid membrane. It carries out the reaction ATP + H2O + 4 H(+)(in) = ADP + phosphate + 5 H(+)(out). Produces ATP from ADP in the presence of a proton gradient across the membrane. The catalytic sites are hosted primarily by the beta subunits. In Oenothera biennis (German evening primrose), this protein is ATP synthase subunit beta, chloroplastic.